We begin with the raw amino-acid sequence, 116 residues long: Iron-sulfur cluster insertion protein ErpA (116 aa).

Iron-sulfur cluster contacts are provided by Cys44, Cys108, and Cys110.

It belongs to the HesB/IscA family. In terms of assembly, homodimer. Iron-sulfur cluster serves as cofactor.

In terms of biological role, required for insertion of 4Fe-4S clusters for at least IspG. In Stutzerimonas stutzeri (strain A1501) (Pseudomonas stutzeri), this protein is Iron-sulfur cluster insertion protein ErpA.